A 298-amino-acid polypeptide reads, in one-letter code: Acetylglutamate kinase (298 aa).

Substrate-binding positions include 73–74, R95, and N188; that span reads GG.

This sequence belongs to the acetylglutamate kinase family. ArgB subfamily.

The protein localises to the cytoplasm. The catalysed reaction is N-acetyl-L-glutamate + ATP = N-acetyl-L-glutamyl 5-phosphate + ADP. It functions in the pathway amino-acid biosynthesis; L-arginine biosynthesis; N(2)-acetyl-L-ornithine from L-glutamate: step 2/4. Functionally, catalyzes the ATP-dependent phosphorylation of N-acetyl-L-glutamate. This Nostoc punctiforme (strain ATCC 29133 / PCC 73102) protein is Acetylglutamate kinase.